Reading from the N-terminus, the 505-residue chain is 2,3-bisphosphoglycerate-independent phosphoglycerate mutase (505 aa).

Residues Asp-12 and Ser-62 each contribute to the Mn(2+) site. Catalysis depends on Ser-62, which acts as the Phosphoserine intermediate. Substrate contacts are provided by residues His-123, 153 to 154, Arg-185, Arg-191, 257 to 260, and Lys-330; these read RD and RPDR. Mn(2+) is bound by residues Asp-397, His-401, Asp-438, His-439, and His-456.

This sequence belongs to the BPG-independent phosphoglycerate mutase family. In terms of assembly, monomer. Mn(2+) serves as cofactor.

It catalyses the reaction (2R)-2-phosphoglycerate = (2R)-3-phosphoglycerate. Its pathway is carbohydrate degradation; glycolysis; pyruvate from D-glyceraldehyde 3-phosphate: step 3/5. Functionally, catalyzes the interconversion of 2-phosphoglycerate and 3-phosphoglycerate. The sequence is that of 2,3-bisphosphoglycerate-independent phosphoglycerate mutase from Staphylococcus aureus (strain COL).